The sequence spans 537 residues: Arginine--tRNA ligase (537 aa).

A 'HIGH' region motif is present at residues Ala-113–His-123.

The protein belongs to the class-I aminoacyl-tRNA synthetase family. Monomer.

The protein localises to the cytoplasm. It catalyses the reaction tRNA(Arg) + L-arginine + ATP = L-arginyl-tRNA(Arg) + AMP + diphosphate. The polypeptide is Arginine--tRNA ligase (argS) (Mycoplasma pneumoniae (strain ATCC 29342 / M129 / Subtype 1) (Mycoplasmoides pneumoniae)).